A 288-amino-acid chain; its full sequence is Sulfur carrier protein FdhD (288 aa).

The tract at residues 1-23 (MMRCMQSPEVHPAAAGDAEPPTH) is disordered. The Cysteine persulfide intermediate role is filled by cysteine 127.

It belongs to the FdhD family.

The protein localises to the cytoplasm. Functionally, required for formate dehydrogenase (FDH) activity. Acts as a sulfur carrier protein that transfers sulfur from IscS to the molybdenum cofactor prior to its insertion into FDH. In Cupriavidus necator (strain ATCC 17699 / DSM 428 / KCTC 22496 / NCIMB 10442 / H16 / Stanier 337) (Ralstonia eutropha), this protein is Sulfur carrier protein FdhD.